A 253-amino-acid polypeptide reads, in one-letter code: Tetraspanin-3 (253 aa).

The Cytoplasmic portion of the chain corresponds to 1-11 (MGQCGITSSKT). A helical membrane pass occupies residues 12 to 32 (VLVFLNLIFWGAAGILCYVGA). The Extracellular portion of the chain corresponds to 33 to 50 (YVFITYDDYDHFFEDVYT). A helical membrane pass occupies residues 51 to 71 (LIPAVVIIAVGALLFIIGLIG). Residues 72 to 85 (CCATIRESRCGLAT) are Cytoplasmic-facing. A helical transmembrane segment spans residues 86–106 (FVIILLLVFVTEVVVVVLGYV). At 107-212 (YRAKVENEVD…KKLQEIMMHV (106 aa)) the chain is on the extracellular side. N-linked (GlcNAc...) asparagine glycans are attached at residues Asn127, Asn152, Asn167, and Asn183. The chain crosses the membrane as a helical span at residues 213-233 (IWAALAFAAIQLLGMLCACIV). The Cytoplasmic segment spans residues 234–253 (LCRRSRDPAYELLITGGTYA).

It belongs to the tetraspanin (TM4SF) family. Interacts with claudin-11/CLDN11 and integrins.

The protein localises to the membrane. In terms of biological role, regulates the proliferation and migration of oligodendrocytes, a process essential for normal myelination and repair. This Homo sapiens (Human) protein is Tetraspanin-3 (TSPAN3).